The sequence spans 80 residues: Toxin Acra I-3 (80 aa).

The signal sequence occupies residues 1–22 (MMKLVLLSVIVILFSLIGSIHG). One can recognise an LCN-type CS-alpha/beta domain in the interval 25–80 (VPGNYPLDSSGNKYPCTVLGDNQSCIDVCKKHGVKYGYCYGFKCWCEYLKDKNVSL). Intrachain disulfides connect Cys40-Cys63, Cys49-Cys68, and Cys53-Cys70.

This sequence belongs to the long (3 C-C) scorpion toxin superfamily. Sodium/Potassium channel inhibitor family. In terms of tissue distribution, expressed by the venom gland.

It is found in the secreted. Functionally, probable neurotoxin that inhibits ion channels. Is toxic to mice. This is Toxin Acra I-3 from Androctonus crassicauda (Arabian fat-tailed scorpion).